A 22-amino-acid chain; its full sequence is Large ribosomal subunit protein bL32 (22 aa).

Residues 1 to 22 (CVQQNKKSRSARDMXXSXDALE) form a disordered region. Low complexity predominate over residues 13 to 22 (DMXXSXDALE).

Belongs to the bacterial ribosomal protein bL32 family.

The protein is Large ribosomal subunit protein bL32 (rpmF) of Ectopseudomonas mendocina (Pseudomonas mendocina).